Reading from the N-terminus, the 609-residue chain is QWRF motif-containing protein 4 (609 aa).

2 disordered regions span residues 1-227 (MQVG…IRGN) and 271-369 (EVSS…TAQS). Composition is skewed to polar residues over residues 11-21 (GKQQQSVSDAT) and 46-57 (EVSSRYRSPTPT). Composition is skewed to low complexity over residues 98–110 (PVSD…PVSS) and 129–143 (SLSV…SVPV). The span at 151-180 (VTSSTDRTLRPSSSNIAHKQQSETTSVTRK) shows a compositional bias: polar residues. 2 stretches are compositionally biased toward low complexity: residues 271-285 (EVSS…SSTE) and 302-332 (SAPG…PSRG). The short motif at 407 to 410 (QWRF) is the QWRF motif element. The segment at 588–609 (EEEVRDDAESSPLLPLSKFQWP) is disordered.

Belongs to the QWRF family.

This is QWRF motif-containing protein 4 (QWRF4) from Arabidopsis thaliana (Mouse-ear cress).